Consider the following 619-residue polypeptide: Zinc finger protein 668 (619 aa).

N-acetylmethionine is present on M1. The residue at position 10 (S10) is a Phosphoserine. A C2H2-type 1 zinc finger spans residues Y22–H44. Residues A34–A79 are disordered. Residues A54–G71 are compositionally biased toward basic and acidic residues. Glycyl lysine isopeptide (Lys-Gly) (interchain with G-Cter in SUMO2) cross-links involve residues K57, K59, K65, and K80. 11 C2H2-type zinc fingers span residues Y84–H106, F112–H134, F140–H162, Y168–H190, Y196–H218, F224–H246, Y252–H274, F280–H302, Y308–H330, F336–H358, and F364–H386. Residue K154 forms a Glycyl lysine isopeptide (Lys-Gly) (interchain with G-Cter in SUMO2) linkage. Position 387 is a phosphoserine (S387). Residues F392–H414 form a C2H2-type 13 zinc finger. The interval R492–P513 is disordered. K512 is covalently cross-linked (Glycyl lysine isopeptide (Lys-Gly) (interchain with G-Cter in SUMO2)). 3 C2H2-type zinc fingers span residues F516 to H538, F544 to H566, and Y572 to H594.

This sequence belongs to the krueppel C2H2-type zinc-finger protein family.

Its subcellular location is the nucleus. Functionally, may be involved in transcriptional regulation. May play a role in DNA repair process. This chain is Zinc finger protein 668 (ZNF668), found in Homo sapiens (Human).